A 270-amino-acid chain; its full sequence is NFAT activation molecule 1 (270 aa).

A signal peptide spans 1-42; that stretch reads MENQPVRWRALPGLPRPPGLPAAPWLLLGVLLLPGTLRLAGG. At 43-163 the chain is on the extracellular side; that stretch reads QSVTHTGLPI…YREPPQSPQK (121 aa). The Ig-like V-type domain maps to 50 to 150; that stretch reads LPIMASLANT…RGSGTFILVR (101 aa). The cysteines at positions 65 and 114 are disulfide-linked. N107 carries N-linked (GlcNAc...) asparagine glycosylation. A helical transmembrane segment spans residues 164–184; the sequence is LLLFGFTGLLSVLSVVGTALL. At 185–270 the chain is on the cytoplasmic side; that stretch reads LWNKKRMRGP…GELNLVYENL (86 aa). Positions 190-219 are disordered; the sequence is RMRGPGKDPTRKCPDPRSASSPKQHPSESV. The segment covering 194 to 204 has biased composition (basic and acidic residues); that stretch reads PGKDPTRKCPD. The segment covering 207–219 has biased composition (polar residues); that stretch reads SASSPKQHPSESV. An ITAM domain is found at 209–237; that stretch reads SSPKQHPSESVYTALQRRETEVYACIENE. Phosphotyrosine is present on residues Y220 and Y231. The disordered stretch occupies residues 234–262; it reads IENEDGSSPTAKQSPLSQERPHRFEDDGE. The segment covering 239–250 has biased composition (polar residues); that stretch reads GSSPTAKQSPLS.

As to quaternary structure, no direct interaction with the B-cell antigen receptor (BCR). Interacts with SYK; probably involved in BCR signaling. Interacts with ZAP70. Post-translationally, N-glycosylated. As to expression, highly expressed in neutrophils, primary monocytes, mast cells, monocytic cell lines and lymphocytes. Also expressed in spleen B and T-cells, and lung. Expressed at low level in non-immune tissue.

The protein resides in the cell membrane. Functionally, may function in immune system as a receptor which activates via the calcineurin/NFAT-signaling pathway the downstream cytokine gene promoters. Activates the transcription of IL-13 and TNF-alpha promoters. May be involved in the regulation of B-cell, but not T-cell, development. Overexpression activates downstream effectors without ligand binding or antibody cross-linking. In Homo sapiens (Human), this protein is NFAT activation molecule 1 (NFAM1).